The primary structure comprises 294 residues: Elongation factor Ts (294 aa).

The interval Thr79 to Val82 is involved in Mg(2+) ion dislocation from EF-Tu.

This sequence belongs to the EF-Ts family.

Its subcellular location is the cytoplasm. In terms of biological role, associates with the EF-Tu.GDP complex and induces the exchange of GDP to GTP. It remains bound to the aminoacyl-tRNA.EF-Tu.GTP complex up to the GTP hydrolysis stage on the ribosome. This chain is Elongation factor Ts, found in Geobacillus sp. (strain WCH70).